The primary structure comprises 493 residues: MTELNKLTVADSIKGLKNKDFTSTELIGAHIKQIEKHRNLNAYVTDTFDLALKQAEAADQNYAQNNARTLEGIPFAAKDLFCTKGIRTTACSNILKNFIPNYESSVTQNIFDKGGVMLGKTNMDEFAMGSANITSCFGNVISPWKANDDNADLVPGGSSGGSAAAVSGFMASAALGSDTGGSVRQPASFTGLVGFKPTYGRCSRYGMISFASSLDQAGIFTRSVLDSSIMLEAMMGFDEKDSTSIKAEVPELQSAIGSSMKNMKIGVPLSLGEGSIIEPDIMKMWQDTIELLKNAGAEIVDITLPHAKYGVAVYYVIAPAEASSNLSRYDGVRYGLRVERENMTLDEMYEMTRSTGFGEEVKRRIMIGTYVLSSSGMDAYYLKAQKVRRLVANDFNNAFAKVDAILLPTAPTAAFKIGEKQNDPTIMYLNDLFTIPASLAGLPCASVPAGLSARGLPLGIQIIGKQLDEYNVLKVASTIESGVKHIKFEPKVF.

Residues Lys-78 and Ser-158 each act as charge relay system in the active site. Residue Ser-182 is the Acyl-ester intermediate of the active site.

The protein belongs to the amidase family. GatA subfamily. In terms of assembly, heterotrimer of A, B and C subunits.

The enzyme catalyses L-glutamyl-tRNA(Gln) + L-glutamine + ATP + H2O = L-glutaminyl-tRNA(Gln) + L-glutamate + ADP + phosphate + H(+). Allows the formation of correctly charged Gln-tRNA(Gln) through the transamidation of misacylated Glu-tRNA(Gln) in organisms which lack glutaminyl-tRNA synthetase. The reaction takes place in the presence of glutamine and ATP through an activated gamma-phospho-Glu-tRNA(Gln). The polypeptide is Glutamyl-tRNA(Gln) amidotransferase subunit A (Rickettsia africae (strain ESF-5)).